The following is an 859-amino-acid chain: DNA mismatch repair protein MutS (859 aa).

617–624 (GPNMGGKS) is a binding site for ATP. The tract at residues 799–821 (ETTSLPHEQPRAKPGKPAVPQQS) is disordered.

This sequence belongs to the DNA mismatch repair MutS family.

In terms of biological role, this protein is involved in the repair of mismatches in DNA. It is possible that it carries out the mismatch recognition step. This protein has a weak ATPase activity. This Pseudomonas syringae pv. syringae (strain B728a) protein is DNA mismatch repair protein MutS.